The sequence spans 130 residues: Nascent polypeptide-associated complex protein (130 aa).

Positions 8–75 constitute an NAC-A/B domain; the sequence is PKMMRQMQKM…AKNIKKDDIK (68 aa).

It belongs to the NAC-alpha family. As to quaternary structure, homodimer. Interacts with the ribosome. Binds ribosomal RNA.

In terms of biological role, contacts the emerging nascent chain on the ribosome. The sequence is that of Nascent polypeptide-associated complex protein from Methanococcus aeolicus (strain ATCC BAA-1280 / DSM 17508 / OCM 812 / Nankai-3).